Consider the following 334-residue polypeptide: Petrobactin import system permease protein FatD (334 aa).

9 consecutive transmembrane segments (helical) span residues 24 to 44 (FIIAIIVVIILGIISLFTGVY), 64 to 84 (TVALMLTGAAMAMAGLVMQLI), 98 to 118 (IEWSSLGLLFVYLLFPAPTLV), 119 to 139 (QRMTGAIIFSFIGTMIFFLFL), 152 to 172 (IIGLMLGAVISAVSTFLGLLF), 197 to 217 (LWLIVIVTLLIFMYANRLTLA), 234 to 254 (IVLFGTALISVAVGIVAAVIG), 277 to 297 (SNLPWVCVIGMGTITACDIIS), and 304 to 324 (FELPVSLILASVGAVVFITIL).

It belongs to the binding-protein-dependent transport system permease family. FecCD subfamily. As to quaternary structure, the complex is composed of two ATP-binding proteins (FatE), two transmembrane proteins (FatC and FatD) and a solute-binding protein (FpuA).

The protein localises to the cell membrane. Part of an ABC transporter complex involved in ferric-petrobactin uptake. Probably responsible for the translocation of the substrate across the membrane. The protein is Petrobactin import system permease protein FatD of Bacillus anthracis.